The primary structure comprises 334 residues: L-lactate dehydrogenase B chain (334 aa).

Ala-2 bears the N-acetylalanine mark. Lys-7 bears the N6-acetyllysine mark. A Phosphoserine modification is found at Ser-44. NAD(+) contacts are provided by residues 53 to 58 (DVLEDK) and Arg-100. Lys-58 is subject to N6-acetyllysine. Arg-107 is a binding site for substrate. Lys-119 is subject to N6-acetyllysine. Residue Asn-139 participates in NAD(+) binding. The substrate site is built by Asn-139 and Arg-170. Residue His-194 is the Proton acceptor of the active site. Phosphotyrosine is present on Tyr-240. A substrate-binding site is contributed by Thr-249. Lys-329 carries the post-translational modification N6-acetyllysine.

It belongs to the LDH/MDH superfamily. LDH family. Homotetramer. Interacts with PTEN upstream reading frame protein MP31; the interaction leads to inhibition of mitochondrial lactate dehydrogenase activity, preventing conversion of lactate to pyruvate in mitochondria.

Its subcellular location is the cytoplasm. The protein localises to the mitochondrion inner membrane. It carries out the reaction (S)-lactate + NAD(+) = pyruvate + NADH + H(+). It functions in the pathway fermentation; pyruvate fermentation to lactate; (S)-lactate from pyruvate: step 1/1. Interconverts simultaneously and stereospecifically pyruvate and lactate with concomitant interconversion of NADH and NAD(+). The chain is L-lactate dehydrogenase B chain (LDHB) from Monodelphis domestica (Gray short-tailed opossum).